The chain runs to 51 residues: Insulin (51 aa).

Cystine bridges form between cysteine 8-cysteine 37, cysteine 20-cysteine 50, and cysteine 36-cysteine 41.

This sequence belongs to the insulin family. In terms of assembly, heterodimer of a B chain and an A chain linked by two disulfide bonds.

The protein resides in the secreted. Functionally, insulin decreases blood glucose concentration. It increases cell permeability to monosaccharides, amino acids and fatty acids. It accelerates glycolysis, the pentose phosphate cycle, and glycogen synthesis in liver. The polypeptide is Insulin (Seriola quinqueradiata (Five-ray yellowtail)).